The following is a 358-amino-acid chain: Methylthioribose-1-phosphate isomerase (358 aa).

Substrate contacts are provided by residues 54-56 (RGA), R96, and Q205. Catalysis depends on D246, which acts as the Proton donor. A substrate-binding site is contributed by 256–257 (GK).

Belongs to the eIF-2B alpha/beta/delta subunits family. MtnA subfamily.

It catalyses the reaction 5-(methylsulfanyl)-alpha-D-ribose 1-phosphate = 5-(methylsulfanyl)-D-ribulose 1-phosphate. The protein operates within amino-acid biosynthesis; L-methionine biosynthesis via salvage pathway; L-methionine from S-methyl-5-thio-alpha-D-ribose 1-phosphate: step 1/6. Catalyzes the interconversion of methylthioribose-1-phosphate (MTR-1-P) into methylthioribulose-1-phosphate (MTRu-1-P). This is Methylthioribose-1-phosphate isomerase from Pseudomonas putida (strain ATCC 47054 / DSM 6125 / CFBP 8728 / NCIMB 11950 / KT2440).